A 90-amino-acid chain; its full sequence is MAVTYEKTFEIEIINELSESVYNRVLNYVLNHELDTKNTRLLEVNLLNQLEVAQEVDLFQQPFEELQAIHEYWRSMNQYSKQILTKEKVA.

The protein belongs to the epsilon antitoxin family. In terms of assembly, in the presence of the zeta toxin, forms an inactive PezA(2)PezT(2) heterotetramer.

Its function is as follows. Antitoxin component of a type II toxin-antitoxin (TA) system. Neutralizes the toxic effect of cognate zeta toxin. Part of a postsegregational killing (PSK) system involved in the killing of plasmid-free cells. Continuous synthesis of the epsilon antitoxin is required to counteract the zeta toxin. The sequence is that of Antitoxin epsilon from Streptococcus agalactiae.